The chain runs to 169 residues: Large ribosomal subunit protein uL5 (169 aa).

This sequence belongs to the universal ribosomal protein uL5 family. As to quaternary structure, part of the 50S ribosomal subunit; contacts the 5S rRNA and probably tRNA. Forms a bridge to the 30S subunit in the 70S ribosome.

Its function is as follows. This is one of the proteins that bind and probably mediate the attachment of the 5S RNA into the large ribosomal subunit, where it forms part of the central protuberance. In the 70S ribosome it contacts protein S13 of the 30S subunit (bridge B1b), connecting the 2 subunits; this bridge is implicated in subunit movement. May contact the P site tRNA; the 5S rRNA and some of its associated proteins might help stabilize positioning of ribosome-bound tRNAs. The sequence is that of Large ribosomal subunit protein uL5 from Nanoarchaeum equitans (strain Kin4-M).